A 452-amino-acid polypeptide reads, in one-letter code: MSTPRRYHITTFGCQMNKADSERMAGILEDLGYIWSEEANDADLVLYNTCTIRDNAEQKVYSYLGRQAERKRQQPDLTLIVAGCVAQQEGESLLRRVPELDLVMGPQHANRLADLLAQVEAGSQVVATEEVEIAEDITQPRRDSTITAWVNVIYGCNERCTYCVVPNVRGREQSREPAAIRAEIEQLAAQGYREITLLGQNIDAYGRDLPGSTPEGRHLHTLTDLLYTIHDVPGIERIRFATSHPRYFTERLIRACAELPKVCEYFHIPFQSGDNDVLKAMARGYTVERYLRIVEQIRDIIPDAAISADAIVAFPGETEEQFENTLKLVEQVGFDLVNTAAYSPRPGTPAANAPNQLSEEVKQDRLQRLNHLVAQMAADRSQRYLGRTEEVLIEATNPRNPQQVMGRTRTNRLVFCDGTIAQLEGQLVPVRITETRAFSLTGQILSPVAAGC.

Residues 5-121 enclose the MTTase N-terminal domain; the sequence is RRYHITTFGC…LADLLAQVEA (117 aa). [4Fe-4S] cluster is bound by residues cysteine 14, cysteine 50, cysteine 84, cysteine 156, cysteine 160, and cysteine 163. Positions 142-379 constitute a Radical SAM core domain; it reads RDSTITAWVN…NHLVAQMAAD (238 aa). A TRAM domain is found at 382–446; the sequence is QRYLGRTEEV…AFSLTGQILS (65 aa).

Belongs to the methylthiotransferase family. MiaB subfamily. As to quaternary structure, monomer. It depends on [4Fe-4S] cluster as a cofactor.

It is found in the cytoplasm. The enzyme catalyses N(6)-dimethylallyladenosine(37) in tRNA + (sulfur carrier)-SH + AH2 + 2 S-adenosyl-L-methionine = 2-methylsulfanyl-N(6)-dimethylallyladenosine(37) in tRNA + (sulfur carrier)-H + 5'-deoxyadenosine + L-methionine + A + S-adenosyl-L-homocysteine + 2 H(+). Catalyzes the methylthiolation of N6-(dimethylallyl)adenosine (i(6)A), leading to the formation of 2-methylthio-N6-(dimethylallyl)adenosine (ms(2)i(6)A) at position 37 in tRNAs that read codons beginning with uridine. The chain is tRNA-2-methylthio-N(6)-dimethylallyladenosine synthase from Synechococcus elongatus (strain ATCC 33912 / PCC 7942 / FACHB-805) (Anacystis nidulans R2).